A 361-amino-acid polypeptide reads, in one-letter code: NAD(P)H-quinone oxidoreductase subunit 1, chloroplastic (361 aa).

Transmembrane regions (helical) follow at residues 28-48 (IWVLIPILTLVLGITLGVLVI), 99-119 (FTIGPSIAVISILLSYSVIPF), 128-148 (LSIGVFLWIAVSSLAPIGLLM), 249-269 (YSGIKFGLFYVASYLNLLVSS), 270-290 (LFVTVLYLGGWNLSIPYLFVP), 301-321 (TIICIFITLAKTYLFLFISIA), and 341-361 (FLLPISLGNLLLTTSFQLLSL).

It belongs to the complex I subunit 1 family. NDH is composed of at least 16 different subunits, 5 of which are encoded in the nucleus.

Its subcellular location is the plastid. It is found in the chloroplast thylakoid membrane. The enzyme catalyses a plastoquinone + NADH + (n+1) H(+)(in) = a plastoquinol + NAD(+) + n H(+)(out). It catalyses the reaction a plastoquinone + NADPH + (n+1) H(+)(in) = a plastoquinol + NADP(+) + n H(+)(out). In terms of biological role, NDH shuttles electrons from NAD(P)H:plastoquinone, via FMN and iron-sulfur (Fe-S) centers, to quinones in the photosynthetic chain and possibly in a chloroplast respiratory chain. The immediate electron acceptor for the enzyme in this species is believed to be plastoquinone. Couples the redox reaction to proton translocation, and thus conserves the redox energy in a proton gradient. This is NAD(P)H-quinone oxidoreductase subunit 1, chloroplastic from Jasminum nudiflorum (Winter jasmine).